Consider the following 347-residue polypeptide: Galactoside alpha-(1,2)-fucosyltransferase 2 (347 aa).

Topologically, residues 1–5 (MASAQ) are cytoplasmic. Residues 6 to 26 (VPFSFPLAHFLIFVFVTSTII) traverse the membrane as a helical; Signal-anchor for type II membrane protein segment. The Lumenal segment spans residues 27–347 (HLQQRIVKLQ…PADLSPLLKH (321 aa)). 4 N-linked (GlcNAc...) asparagine glycosylation sites follow: asparagine 192, asparagine 258, asparagine 286, and asparagine 312.

This sequence belongs to the glycosyltransferase 11 family. As to expression, expressed in stomach, colon, ovary and uterus, specifically in luminal uterine epithelium. Expressed in various tissues including heart, liver, kidney, testis, epididymis, small intestine,and cecum. Expressed in duodenum, jejunum and ileum.

Its subcellular location is the golgi apparatus. It is found in the golgi stack membrane. It carries out the reaction a beta-D-galactosyl-(1-&gt;3)-N-acetyl-beta-D-glucosaminyl derivative + GDP-beta-L-fucose = an alpha-L-Fuc-(1-&gt;2)-beta-D-Gal-(1-&gt;3)-beta-D-GlcNAc derivative + GDP + H(+). The enzyme catalyses a beta-D-galactosyl-(1-&gt;4)-N-acetyl-beta-D-glucosaminyl derivative + GDP-beta-L-fucose = an alpha-L-Fuc-(1-&gt;2)-beta-D-Gal-(1-&gt;4)-beta-D-GlcNAc derivative + GDP + H(+). It catalyses the reaction a neolactoside nLc4Cer + GDP-beta-L-fucose = a neolactoside IV(2)-alpha-Fuc-nLc4Cer + GDP + H(+). The catalysed reaction is a neolactoside nLc4Cer(d18:1(4E)) + GDP-beta-L-fucose = a neolactoside IV(2)-alpha-Fuc-nLc4Cer(d18:1(4E)) + GDP + H(+). It carries out the reaction a ganglioside GM1 + GDP-beta-L-fucose = a ganglioside Fuc-GM1 + GDP + H(+). The enzyme catalyses a ganglioside GA1 + GDP-beta-L-fucose = a ganglioside Fuc-GA1 + GDP + H(+). It catalyses the reaction Lc4Cer + GDP-beta-L-fucose = alpha-L-fucosyl-(1-&gt;2)-beta-D-galactosyl-(1-&gt;3)-N-acetyl-beta-D-glucosaminyl-(1-&gt;3)-beta-D-galactosyl-(1-&gt;4)-beta-D-glucosyl-(1&lt;-&gt;1')-ceramide + GDP + H(+). The catalysed reaction is a beta-D-Gal-(1-&gt;3)-beta-D-GlcNAc-(1-&gt;3)-beta-D-Gal-(1-&gt;4)-beta-D-Glc-(1&lt;-&gt;1')-Cer(d18:1(4E)) + GDP-beta-L-fucose = alpha-L-fucosyl-(1-&gt;2)- beta-D-galactosyl-(1-&gt;3)-N-acetyl-beta-D-glucosaminyl-(1-&gt;3)-beta-D-galactosyl-(1-&gt;4)-beta-D-glucosyl-(1&lt;-&gt;1')-N-acylsphing-4-enine + GDP + H(+). It carries out the reaction a ganglioside GD1b + GDP-beta-L-fucose = a ganglioside Fuc-GD1b + GDP + H(+). The enzyme catalyses a ganglioside GM1 (d18:1(4E)) + GDP-beta-L-fucose = a ganglioside Fuc-GM1 (d18:1(4E)) + GDP + H(+). It catalyses the reaction a globoside GalGb4Cer (d18:1(4E)) + GDP-beta-L-fucose = a globoside Globo-H (d18:1(4E)) + GDP + H(+). The catalysed reaction is a lactoside III(4)-a-Fuc-Lc4Cer + GDP-beta-L-fucose = a lactoside IV(2),III(4)-a-[Fuc]2-Lc4Cer + GDP + H(+). It carries out the reaction beta-D-galactosyl-(1-&gt;3)-N-acetyl-D-galactosamine + GDP-beta-L-fucose = alpha-L-fucosyl-(1-&gt;2)-beta-D-galactosyl-(1-&gt;3)-N-acetyl-D-galactosamine + GDP + H(+). It functions in the pathway protein modification; protein glycosylation. Catalyzes the transfer of L-fucose, from a guanosine diphosphate-beta-L-fucose, to the terminal galactose on both O- and N-linked glycans chains of cell surface glycoproteins and glycolipids and the resulting epitope regulates several processes such as cell-cell interaction including host-microbe interaction, cell surface expression and cell proliferation. Preferentially fucosylates gangliosides GA1 and GM1 in the antrum, cecum and colon and in the female reproductive organs. Fucosylated host glycoproteins or glycolipids mediate interaction with intestinal microbiota influencing its composition. Creates a soluble precursor oligosaccharide FuC-alpha ((1,2)Galbeta-) called the H antigen which is an essential substrate for the final step in the soluble ABO blood group antigen synthesis pathway. This is Galactoside alpha-(1,2)-fucosyltransferase 2 from Mus musculus (Mouse).